A 416-amino-acid polypeptide reads, in one-letter code: N-acetylmuramoyl-L-alanine amidase AmiC (416 aa).

A signal peptide spans 1–26 (MIKLTRRQIIRRTAGTLFALSPIASA). The disordered stretch occupies residues 166 to 191 (RGSPEADLAQNTTPQPGRGRNGRRPV). The 214-residue stretch at 192–405 (IMLDPGHGGE…CAQSIASGVQ (214 aa)) folds into the MurNAc-LAA domain.

It belongs to the N-acetylmuramoyl-L-alanine amidase 3 family.

It is found in the periplasm. It catalyses the reaction Hydrolyzes the link between N-acetylmuramoyl residues and L-amino acid residues in certain cell-wall glycopeptides.. Its function is as follows. Cell-wall hydrolase involved in septum cleavage during cell division. This is N-acetylmuramoyl-L-alanine amidase AmiC (amiC) from Neisseria meningitidis serogroup B (strain ATCC BAA-335 / MC58).